We begin with the raw amino-acid sequence, 1397 residues long: DNA-directed RNA polymerase subunit beta' (1397 aa).

Zn(2+) contacts are provided by cysteine 71, cysteine 73, cysteine 86, and cysteine 89. Residues aspartate 462, aspartate 464, and aspartate 466 each contribute to the Mg(2+) site. Residues cysteine 811, cysteine 885, cysteine 892, and cysteine 895 each coordinate Zn(2+). Positions 1368-1397 (QNRDDKILEDQGGATPTASTEIKEPAEGAA) are disordered. Basic and acidic residues predominate over residues 1388–1397 (EIKEPAEGAA).

It belongs to the RNA polymerase beta' chain family. The RNAP catalytic core consists of 2 alpha, 1 beta, 1 beta' and 1 omega subunit. When a sigma factor is associated with the core the holoenzyme is formed, which can initiate transcription. Mg(2+) serves as cofactor. The cofactor is Zn(2+).

It carries out the reaction RNA(n) + a ribonucleoside 5'-triphosphate = RNA(n+1) + diphosphate. Functionally, DNA-dependent RNA polymerase catalyzes the transcription of DNA into RNA using the four ribonucleoside triphosphates as substrates. This chain is DNA-directed RNA polymerase subunit beta', found in Parvibaculum lavamentivorans (strain DS-1 / DSM 13023 / NCIMB 13966).